Consider the following 146-residue polypeptide: Large ribosomal subunit protein uL15 (146 aa).

Positions 1 to 13 (MKLHELRPAEGSK) are enriched in basic and acidic residues. Positions 1–54 (MKLHELRPAEGSKKAPKRVGRGNGSGLGKTAGKGHKGQNARSGGGVRPGFEGGQ) are disordered. Gly residues-rich tracts occupy residues 21–31 (RGNGSGLGKTA) and 42–52 (SGGGVRPGFEG).

It belongs to the universal ribosomal protein uL15 family. Part of the 50S ribosomal subunit.

In terms of biological role, binds to the 23S rRNA. The polypeptide is Large ribosomal subunit protein uL15 (Clostridium novyi (strain NT)).